A 466-amino-acid polypeptide reads, in one-letter code: Glutamate decarboxylase (466 aa).

At Lys277 the chain carries N6-(pyridoxal phosphate)lysine.

Belongs to the group II decarboxylase family. The cofactor is pyridoxal 5'-phosphate.

It catalyses the reaction L-glutamate + H(+) = 4-aminobutanoate + CO2. Its function is as follows. Converts internalized glutamate to GABA and increases the internal pH. Involved in glutamate-dependent acid resistance. The chain is Glutamate decarboxylase (gadB) from Lactococcus lactis subsp. lactis (strain IL1403) (Streptococcus lactis).